The chain runs to 482 residues: tRNA sulfurtransferase (482 aa).

The THUMP domain maps to 61 to 165 (LAIRDALTRI…DDRLLLIKGR (105 aa)). ATP is bound by residues 183 to 184 (LI), Lys265, Gly287, and Gln296. Cys344 and Cys456 form a disulfide bridge. Residues 404–482 (FGPNDVILDI…GFENVKAYRP (79 aa)) enclose the Rhodanese domain. Cys456 acts as the Cysteine persulfide intermediate in catalysis.

Belongs to the ThiI family.

Its subcellular location is the cytoplasm. It carries out the reaction [ThiI sulfur-carrier protein]-S-sulfanyl-L-cysteine + a uridine in tRNA + 2 reduced [2Fe-2S]-[ferredoxin] + ATP + H(+) = [ThiI sulfur-carrier protein]-L-cysteine + a 4-thiouridine in tRNA + 2 oxidized [2Fe-2S]-[ferredoxin] + AMP + diphosphate. It catalyses the reaction [ThiS sulfur-carrier protein]-C-terminal Gly-Gly-AMP + S-sulfanyl-L-cysteinyl-[cysteine desulfurase] + AH2 = [ThiS sulfur-carrier protein]-C-terminal-Gly-aminoethanethioate + L-cysteinyl-[cysteine desulfurase] + A + AMP + 2 H(+). The protein operates within cofactor biosynthesis; thiamine diphosphate biosynthesis. Its function is as follows. Catalyzes the ATP-dependent transfer of a sulfur to tRNA to produce 4-thiouridine in position 8 of tRNAs, which functions as a near-UV photosensor. Also catalyzes the transfer of sulfur to the sulfur carrier protein ThiS, forming ThiS-thiocarboxylate. This is a step in the synthesis of thiazole, in the thiamine biosynthesis pathway. The sulfur is donated as persulfide by IscS. This chain is tRNA sulfurtransferase, found in Salmonella gallinarum (strain 287/91 / NCTC 13346).